The following is a 271-amino-acid chain: Sedoheptulose 1,7-bisphosphatase (271 aa).

Arg12 contributes to the substrate binding site. The active-site Tele-phosphohistidine intermediate is His13. Substrate contacts are provided by residues 24 to 25 (YT), Arg69, 99 to 102 (EWEY), Arg181, and His244. The active-site Proton donor/acceptor is the Glu99.

This sequence belongs to the phosphoglycerate mutase family. SHB17 subfamily. As to quaternary structure, homodimer.

The protein localises to the cytoplasm. It localises to the nucleus. It carries out the reaction D-sedoheptulose 1,7-bisphosphate + H2O = D-sedoheptulose 7-phosphate + phosphate. Functionally, sedoheptulose 1,7-bisphosphatase involved in riboneogenesis. Dephosphorylates sedoheptulose 1,7-bisphosphate (SBP), which is converted via the non-oxidative pentose phosphate pathway to ribose-5-phosphate. Has a fructose 1,6-bisphosphatase activity in vitro, but this is probably not biologically relevant, since deletion does not affect fructose 1,6-biphosphate (FBP) levels. This Saccharomyces cerevisiae (strain ATCC 204508 / S288c) (Baker's yeast) protein is Sedoheptulose 1,7-bisphosphatase (SHB17).